The chain runs to 153 residues: Small ribosomal subunit protein uS5 (153 aa).

The 64-residue stretch at 15–78 (FQEVVVNVGR…DDAFKNLIHV (64 aa)) folds into the S5 DRBM domain.

Belongs to the universal ribosomal protein uS5 family. As to quaternary structure, part of the 30S ribosomal subunit. Contacts proteins S4 and S8.

Functionally, with S4 and S12 plays an important role in translational accuracy. Its function is as follows. Located at the back of the 30S subunit body where it stabilizes the conformation of the head with respect to the body. The protein is Small ribosomal subunit protein uS5 of Helicobacter acinonychis (strain Sheeba).